The following is a 257-amino-acid chain: uncharacterized protein (257 aa).

Active-site charge relay system residues include Ser-122 and His-236.

The protein belongs to the peptidase S9B family.

This is an uncharacterized protein from Bacillus subtilis (strain 168).